Consider the following 878-residue polypeptide: AP-2 complex subunit alpha (878 aa).

It belongs to the adaptor complexes large subunit family. Adaptor protein complex 2 (AP-2) is a heterotetramer composed of two large adaptins (alpha-type subunit apl3 and beta-type subunit apl1), a medium chain (mu-type subunit apm4) and a small adaptin (sigma-type subunit aps2).

The protein resides in the cell membrane. It is found in the membrane. The protein localises to the coated pit. Functionally, adaptins are components of the adaptor complexes which link clathrin to receptors in coated vesicles. Clathrin-associated protein complexes are believed to interact with the cytoplasmic tails of membrane proteins, leading to their selection and concentration. Alpha adaptin is a subunit of the plasma membrane adaptor. This chain is AP-2 complex subunit alpha (apl3), found in Schizosaccharomyces pombe (strain 972 / ATCC 24843) (Fission yeast).